The chain runs to 364 residues: Nucleoporin SEH1 (364 aa).

WD repeat units follow at residues 10–49, 55–96, 111–152, 160–210, 217–258, and 276–315; these read DHKDLIHDVSYDFHGRRMATCSSDQSVKVWDKGDDGEWHC, THSG…SNDK, DSRT…NLSQ, SCKL…RKYA, TVTD…RESA, and SHNSQVWRVSWNITSTLLASSGDDGCVRLWKANYMDNWKC.

Belongs to the WD repeat SEC13 family. As to quaternary structure, component of the Nup107-160 subcomplex of the nuclear pore complex (NPC). The Nup107-160 subcomplex includes NUP160, NUP133, NUP107, NUP98, NUP85, NUP43, NUP37, SEH1 and SEC13. Component of the GATOR2 subcomplex, composed of MIOS, SEC13, SEH1L, WDR24 and WDR59. The GATOR2 complex interacts with CASTOR1 and CASTOR2; the interaction is negatively regulated by arginine. The GATOR2 complex interacts with SESN1, SESN2 and SESN3; the interaction is negatively regulated by amino acids.

The protein resides in the chromosome. The protein localises to the centromere. It is found in the kinetochore. It localises to the nucleus. Its subcellular location is the nuclear pore complex. The protein resides in the lysosome membrane. The GATOR2 complex is negatively regulated by the upstream amino acid sensors CASTOR1 and SESN2, which sequester the GATOR2 complex in absence of amino acids. In the presence of abundant amino acids, GATOR2 is released from CASTOR1 and SESN2 and activated. Component of the Nup107-160 subcomplex of the nuclear pore complex (NPC). The Nup107-160 subcomplex is required for the assembly of a functional NPC. The Nup107-160 subcomplex is also required for normal kinetochore microtubule attachment, mitotic progression and chromosome segregation. This subunit plays a role in recruitment of the Nup107-160 subcomplex to the kinetochore. In terms of biological role, as a component of the GATOR2 complex, functions as an activator of the amino acid-sensing branch of the mTORC1 signaling pathway. The GATOR2 complex indirectly activates mTORC1 through the inhibition of the GATOR1 subcomplex. GATOR2 probably acts as an E3 ubiquitin-protein ligase toward GATOR1. In the presence of abundant amino acids, the GATOR2 complex mediates ubiquitination of the NPRL2 core component of the GATOR1 complex, leading to GATOR1 inactivation. In the absence of amino acids, GATOR2 is inhibited, activating the GATOR1 complex. The protein is Nucleoporin SEH1 (seh1l) of Danio rerio (Zebrafish).